Consider the following 213-residue polypeptide: ATP synthase peripheral stalk subunit OSCP, mitochondrial (213 aa).

A mitochondrion-targeting transit peptide spans 1 to 23 (MAAPAVSGVSQQVRYFGTSVVRP). Residues 5–23 (AVSGVSQQVRYFGTSVVRP) carry the SIFI-degron motif. N6-acetyllysine is present on residues Lys-54, Lys-60, Lys-70, and Lys-73. Residue Lys-90 is modified to N6-succinyllysine. Residues Lys-158 and Lys-162 each carry the N6-acetyllysine; alternate modification. Lys-158 and Lys-162 each carry N6-succinyllysine; alternate. Residues Lys-172, Lys-176, and Lys-192 each carry the N6-acetyllysine modification. The residue at position 199 (Lys-199) is an N6-succinyllysine.

The protein belongs to the ATPase delta chain family. In terms of assembly, component of the ATP synthase complex composed at least of ATP5F1A/subunit alpha, ATP5F1B/subunit beta, ATP5MC1/subunit c (homooctomer), MT-ATP6/subunit a, MT-ATP8/subunit 8, ATP5ME/subunit e, ATP5MF/subunit f, ATP5MG/subunit g, ATP5MK/subunit k, ATP5MJ/subunit j, ATP5F1C/subunit gamma, ATP5F1D/subunit delta, ATP5F1E/subunit epsilon, ATP5PF/subunit F6, ATP5PB/subunit b, ATP5PD/subunit d, ATP5PO/subunit OSCP. ATP synthase complex consists of a soluble F(1) head domain (subunits alpha(3) and beta(3)) - the catalytic core - and a membrane F(0) domain - the membrane proton channel (subunits c, a, 8, e, f, g, k and j). These two domains are linked by a central stalk (subunits gamma, delta, and epsilon) rotating inside the F1 region and a stationary peripheral stalk (subunits F6, b, d, and OSCP). Post-translationally, acetylation at Lys-162 decreases ATP production. Deacetylated by SIRT3. In terms of processing, in response to mitochondrial stress, the precursor protein is ubiquitinated by the SIFI complex in the cytoplasm before mitochondrial import, leading to its degradation. Within the SIFI complex, UBR4 initiates ubiquitin chain that are further elongated or branched by KCMF1.

The protein resides in the mitochondrion. It is found in the mitochondrion inner membrane. Subunit OSCP, of the mitochondrial membrane ATP synthase complex (F(1)F(0) ATP synthase or Complex V) that produces ATP from ADP in the presence of a proton gradient across the membrane which is generated by electron transport complexes of the respiratory chain. ATP synthase complex consist of a soluble F(1) head domain - the catalytic core - and a membrane F(1) domain - the membrane proton channel. These two domains are linked by a central stalk rotating inside the F(1) region and a stationary peripheral stalk. During catalysis, ATP synthesis in the catalytic domain of F(1) is coupled via a rotary mechanism of the central stalk subunits to proton translocation. In vivo, can only synthesize ATP although its ATP hydrolase activity can be activated artificially in vitro. Part of the complex F(0) domain. Part of the complex F(0) domain and the peripheric stalk, which acts as a stator to hold the catalytic alpha(3)beta(3) subcomplex and subunit a/ATP6 static relative to the rotary elements. The chain is ATP synthase peripheral stalk subunit OSCP, mitochondrial from Callithrix jacchus (White-tufted-ear marmoset).